The primary structure comprises 524 residues: Caffeate CoA-transferase (524 aa).

The active-site 5-glutamyl coenzyme A thioester intermediate is glutamate 323.

The protein belongs to the 3-oxoacid CoA-transferase family. In terms of assembly, homodimer.

It catalyses the reaction hydrocaffeoyl-CoA + (E)-caffeate = 3-(3,4-dihydroxyphenyl)propanoate + (E)-caffeoyl-CoA. Its function is as follows. Involved in caffeate respiration, which consists in the reduction of the C-C double bond of caffeate. CarA catalyzes an energy-saving CoA loop for caffeate activation in the steady state of caffeate respiration. It catalyzes the formation of caffeyl-CoA from caffeate with hydrocaffeyl-CoA as the CoA donor via a ping-pong mechanism. In addition to caffeate, the enzyme can utilize 4-coumarate or ferulate as CoA acceptor. Neither acetyl-CoA nor butyryl-CoA served as the CoA donor. The sequence is that of Caffeate CoA-transferase from Acetobacterium woodii.